Consider the following 308-residue polypeptide: F420-non-reducing hydrogenase subunit G (308 aa).

It belongs to the [NiFe]/[NiFeSe] hydrogenase small subunit family. As to quaternary structure, the F420-non-reducing hydrogenase is composed of three subunits; MvhA, MvhD and MvhG. It forms a complex with the heterodisulfide reductase (hdr).

Part of a complex that provides reducing equivalents for heterodisulfide reductase. This is F420-non-reducing hydrogenase subunit G (mvhG) from Methanothermobacter thermautotrophicus (strain ATCC 29096 / DSM 1053 / JCM 10044 / NBRC 100330 / Delta H) (Methanobacterium thermoautotrophicum).